Consider the following 528-residue polypeptide: Protein WHAT'S THIS FACTOR 1 homolog, chloroplastic (528 aa).

A chloroplast-targeting transit peptide spans 1-73; that stretch reads MEPKLLLSAH…KTRVVVEPVR (73 aa). A PORR domain is found at 80–408; that stretch reads KELTFDSVVQ…VKEKMRALVS (329 aa). The segment at 410 to 528 is disordered; sequence PRFPRRGGPR…FPDGTPREKW (119 aa). Over residues 418 to 428 the composition is skewed to basic and acidic residues; the sequence is PRKDEEGREVE. Acidic residues predominate over residues 429–491; that stretch reads IDGSDADGEE…DDDDEDEEED (63 aa).

Its subcellular location is the plastid. It localises to the chloroplast. Its function is as follows. RNA-binding protein involved in group II intron splicing. Binds specific group II introns and promotes their splicing. Functions in the context of a heterodimer with the ribonuclease III domain-containing protein RNC1. The chain is Protein WHAT'S THIS FACTOR 1 homolog, chloroplastic from Arabidopsis thaliana (Mouse-ear cress).